Reading from the N-terminus, the 372-residue chain is Cytochrome b (372 aa).

The next 4 helical transmembrane spans lie at 25 to 45 (FGSMLLTCSIIQMTTGFFLAI), 69 to 90 (WCLQNLHSIGASMFFICIYIHI), 105 to 125 (WMSGILLLTILMATSFFGYVL), and 170 to 190 (FFALHFILPFMIMSTSSIHII). 2 residues coordinate heme b: His75 and His89. 2 residues coordinate heme b: His174 and His188. A ubiquinone is bound at residue His193. 4 consecutive transmembrane segments (helical) span residues 218 to 238 (YKDLFMLTLLLFTMMSIMSFS), 280 to 300 (LGGTLALLLSIMILLLPPFTH), 312 to 332 (MAQFLFWTMITTFVILTWAAS), and 339 to 358 (YITISQMASTMYFLFFIINP).

This sequence belongs to the cytochrome b family. The cytochrome bc1 complex contains 3 respiratory subunits (MT-CYB, CYC1 and UQCRFS1), 2 core proteins (UQCRC1 and UQCRC2) and probably 6 low-molecular weight proteins. The cofactor is heme b.

The protein localises to the mitochondrion inner membrane. Functionally, component of the ubiquinol-cytochrome c reductase complex (complex III or cytochrome b-c1 complex) that is part of the mitochondrial respiratory chain. The b-c1 complex mediates electron transfer from ubiquinol to cytochrome c. Contributes to the generation of a proton gradient across the mitochondrial membrane that is then used for ATP synthesis. The protein is Cytochrome b (MT-CYB) of Acrochordus granulatus (Rasp-skinned water snake).